The primary structure comprises 683 residues: Dipeptidyl-peptidase 5 (683 aa).

Positions 1–19 are cleaved as a signal peptide; that stretch reads MHSLFKQLVFFLVMTLTAA. 6 N-linked (GlcNAc...) asparagine glycosylation sites follow: N53, N69, N103, N116, N126, and N400. Catalysis depends on charge relay system residues S535, D617, and H649.

The protein belongs to the peptidase S9C family.

Its subcellular location is the secreted. It is found in the cytoplasm. It localises to the nucleus. The sequence is that of Dipeptidyl-peptidase 5 from Schizosaccharomyces pombe (strain 972 / ATCC 24843) (Fission yeast).